The primary structure comprises 428 residues: Glutamate-1-semialdehyde 2,1-aminomutase (428 aa).

Position 266 is an N6-(pyridoxal phosphate)lysine (lysine 266).

The protein belongs to the class-III pyridoxal-phosphate-dependent aminotransferase family. HemL subfamily. Homodimer. Requires pyridoxal 5'-phosphate as cofactor.

Its subcellular location is the cytoplasm. It carries out the reaction (S)-4-amino-5-oxopentanoate = 5-aminolevulinate. The protein operates within porphyrin-containing compound metabolism; protoporphyrin-IX biosynthesis; 5-aminolevulinate from L-glutamyl-tRNA(Glu): step 2/2. The chain is Glutamate-1-semialdehyde 2,1-aminomutase from Herminiimonas arsenicoxydans.